The chain runs to 286 residues: ATP synthase gamma chain (286 aa).

Belongs to the ATPase gamma chain family. In terms of assembly, F-type ATPases have 2 components, CF(1) - the catalytic core - and CF(0) - the membrane proton channel. CF(1) has five subunits: alpha(3), beta(3), gamma(1), delta(1), epsilon(1). CF(0) has three main subunits: a, b and c.

Its subcellular location is the cell inner membrane. In terms of biological role, produces ATP from ADP in the presence of a proton gradient across the membrane. The gamma chain is believed to be important in regulating ATPase activity and the flow of protons through the CF(0) complex. This chain is ATP synthase gamma chain, found in Flavobacterium johnsoniae (strain ATCC 17061 / DSM 2064 / JCM 8514 / BCRC 14874 / CCUG 350202 / NBRC 14942 / NCIMB 11054 / UW101) (Cytophaga johnsonae).